Consider the following 625-residue polypeptide: Branchpoint-bridging protein (625 aa).

Over residues 1 to 16 (MSWRSNAQRTGMNAQP) the composition is skewed to polar residues. 2 disordered regions span residues 1–154 (MSWR…AIGA) and 177–206 (LRSG…RTNT). Gly residues predominate over residues 22–31 (RWGGAGGAGE). Low complexity-rich tracts occupy residues 32 to 61 (GPSS…SQPY), 70 to 91 (SSSS…AVAA), and 110 to 130 (SYAA…GADA). Residues 177–190 (LRSGDFVPPDRERS) show a composition bias toward basic and acidic residues. The KH domain maps to 253–330 (YLPIKEFPEI…ASVKKCIKLI (78 aa)). 2 consecutive CCHC-type zinc fingers follow at residues 368–385 (QLCK…ECPE) and 393–410 (IICH…DCTQ). The tract at residues 466 to 533 (GPDGKKIPPW…HAYHQQQQAY (68 aa)) is disordered. Residues 488–503 (APRGGDAGRGGWGHRG) are compositionally biased toward gly residues. Positions 516 to 533 (QHQQQQHPHAYHQQQQAY) are enriched in low complexity.

Belongs to the BBP/SF1 family.

The protein localises to the nucleus. In terms of biological role, necessary for the splicing of pre-mRNA. Has a role in the recognition of the branch site (5'-UACUAAC-3'), the pyrimidine tract and the 3'-splice site at the 3'-end of introns. In Mycosarcoma maydis (Corn smut fungus), this protein is Branchpoint-bridging protein (BBP).